The primary structure comprises 500 residues: Glutathione gamma-glutamylcysteinyltransferase 1 (500 aa).

Residues 1-221 form the Peptidase C83 domain; it reads MEVASLYRRV…GFMLVSRRSS (221 aa). Residues Cys56, His162, and Asp180 contribute to the active site.

The protein belongs to the phytochelatin synthase family. Expressed in roots and shoots.

It carries out the reaction [Glu(-Cys)](n)-Gly + glutathione + H(+) = [Glu(-Cys)](n+1)-Gly + glycine. Its activity is regulated as follows. Requires cadmium for activity. Involved in the synthesis of phytochelatins (PC) and homophytochelatins (hPC), the heavy-metal-binding peptides of plants. The protein is Glutathione gamma-glutamylcysteinyltransferase 1 (PCS1) of Triticum aestivum (Wheat).